The chain runs to 318 residues: Olfactory receptor 13C5 (318 aa).

Residues 1–25 (MEWENHTILVEFFLKGLSGHPRLEL) lie on the Extracellular side of the membrane. N5 carries N-linked (GlcNAc...) asparagine glycosylation. Residues 26–46 (LFFVLIFIMYVVILLGNGTLI) form a helical membrane-spanning segment. The Cytoplasmic segment spans residues 47–54 (LISILDPH). The helical transmembrane segment at 55–75 (LHTPMYFFLGNLSFLDICYTT) threads the bilayer. Residues 76–99 (TSIPSTLVSFLSERKTISLSGCAV) lie on the Extracellular side of the membrane. C97 and C189 are disulfide-bonded. Residues 100–120 (QMFLSLAMGTTECVLLGVMAF) form a helical membrane-spanning segment. Over 121 to 139 (DRYVAICNPLRYPIIMSKD) the chain is Cytoplasmic. The helical transmembrane segment at 140 to 160 (AYVPMAAGSWIIGAVNSAVQT) threads the bilayer. The Extracellular segment spans residues 161–197 (VFVVQLPFCRNNIINHFTCEILAVMKLACADISGNEF). The helical transmembrane segment at 198–217 (ILLVTTTLFLLTPLLLIIVS) threads the bilayer. Topologically, residues 218–237 (YTLIILSIFKISSSEGRSKP) are cytoplasmic. A helical membrane pass occupies residues 238-258 (SSTCSARLTVVITFCGTIFLM). The Extracellular portion of the chain corresponds to 259–277 (YMKPKSQETLNSDDLDATD). Residues 278–298 (KLIFIFYRVMTPMMNPLIYSL) traverse the membrane as a helical segment. Residues 299–318 (RNKDVKEAVKHLLRRKNFNK) lie on the Cytoplasmic side of the membrane.

Belongs to the G-protein coupled receptor 1 family.

The protein resides in the cell membrane. In terms of biological role, odorant receptor. The sequence is that of Olfactory receptor 13C5 (OR13C5) from Homo sapiens (Human).